Here is a 139-residue protein sequence, read N- to C-terminus: Protein cornichon homolog 4 (139 aa).

The next 3 helical transmembrane spans lie at Val-5–Ile-25, Leu-57–Val-77, and Leu-118–Asn-138.

The protein belongs to the cornichon family. As to quaternary structure, interacts with Sec23/24 complex components SEC24B and SEC24D. Interacts with CCR5. Interacts with ADRB2 in the early secretory pathway.

The protein resides in the membrane. It localises to the endoplasmic reticulum. The protein localises to the endoplasmic reticulum-Golgi intermediate compartment. In terms of biological role, involved in G protein-coupled receptors (GPCRs) trafficking from the endoplasmic reticulum to the cell surface; it promotes the exit of GPCRs from the early secretory pathway, likely through interaction with the COPII machinery. The polypeptide is Protein cornichon homolog 4 (CNIH4) (Bos taurus (Bovine)).